We begin with the raw amino-acid sequence, 640 residues long: Chaperone protein dnaK2 (640 aa).

Residue threonine 197 is modified to Phosphothreonine; by autocatalysis. The interval 605–640 is disordered; it reads VYQSAQSSDGTGSSSSGGSGSGGDDEVIDAEFSETK. Over residues 627-640 the composition is skewed to acidic residues; it reads GDDEVIDAEFSETK.

This sequence belongs to the heat shock protein 70 family.

Acts as a chaperone. The protein is Chaperone protein dnaK2 (dnaK2) of Thermosynechococcus vestitus (strain NIES-2133 / IAM M-273 / BP-1).